The sequence spans 52 residues: uncharacterized protein (52 aa).

The segment at Leu24–Ala52 is disordered.

This is an uncharacterized protein from Treponema pallidum (strain Nichols).